A 239-amino-acid polypeptide reads, in one-letter code: Probable transcriptional regulatory protein Ajs_1898 (239 aa).

Positions 1 to 21 are disordered; it reads MAGHSKWANIQHRKGRQDEKR.

Belongs to the TACO1 family.

The protein localises to the cytoplasm. This is Probable transcriptional regulatory protein Ajs_1898 from Acidovorax sp. (strain JS42).